A 64-amino-acid chain; its full sequence is Large ribosomal subunit protein bL35c (64 aa).

The protein belongs to the bacterial ribosomal protein bL35 family.

It is found in the plastid. Its subcellular location is the chloroplast. This is Large ribosomal subunit protein bL35c from Cyanidium caldarium (Red alga).